The primary structure comprises 173 residues: MSDNPTPESTPEAETPEVEKPMEPQGKVFDEAYVQSLRQEAAAARVAKKDAVEAAEARVKAEYEAKLAERDTAYTELQNQLGQAWIELEKVYLSLDAKVPNDKVRAFVEILEGNDRDSIAESVKSRLELVGGFGNKTPSPAFDPSQGRGGKPPIPLNGDPILEAIKAAVGIKK.

Over residues 1 to 13 the composition is skewed to low complexity; sequence MSDNPTPESTPEA. The interval 1–27 is disordered; it reads MSDNPTPESTPEAETPEVEKPMEPQGK. The stretch at 36 to 84 forms a coiled coil; the sequence is SLRQEAAAARVAKKDAVEAAEARVKAEYEAKLAERDTAYTELQNQLGQA. The disordered stretch occupies residues 134–158; it reads GNKTPSPAFDPSQGRGGKPPIPLNG.

Belongs to the L5likevirus scaffolding protein family.

In terms of biological role, scaffolding protein involved in the icosahedric procapsid assembly. Coassembles with the capsid proteins to form the procapsid, in which the scaffolding protein is found within the external shell of icosahedrally arranged capsid protein subunits. The protein is Probable capsid assembly scaffolding protein (16) of Mycobacterium (Mycobacteriophage L5).